The primary structure comprises 389 residues: 23S rRNA (uracil(747)-C(5))-methyltransferase RlmC (389 aa).

Cysteine 12, cysteine 20, cysteine 23, and cysteine 99 together coordinate [4Fe-4S] cluster. The S-adenosyl-L-methionine site is built by glutamine 224, phenylalanine 253, glutamate 274, and asparagine 321. The Nucleophile role is filled by cysteine 348.

Belongs to the class I-like SAM-binding methyltransferase superfamily. RNA M5U methyltransferase family. RlmC subfamily.

It catalyses the reaction uridine(747) in 23S rRNA + S-adenosyl-L-methionine = 5-methyluridine(747) in 23S rRNA + S-adenosyl-L-homocysteine + H(+). In terms of biological role, catalyzes the formation of 5-methyl-uridine at position 747 (m5U747) in 23S rRNA. This is 23S rRNA (uracil(747)-C(5))-methyltransferase RlmC from Shewanella sp. (strain W3-18-1).